Reading from the N-terminus, the 227-residue chain is tRNA (guanine-N(1)-)-methyltransferase (227 aa).

S-adenosyl-L-methionine is bound by residues glycine 112 and 132–137; that span reads LGDFVL.

Belongs to the RNA methyltransferase TrmD family. In terms of assembly, homodimer.

It localises to the cytoplasm. The enzyme catalyses guanosine(37) in tRNA + S-adenosyl-L-methionine = N(1)-methylguanosine(37) in tRNA + S-adenosyl-L-homocysteine + H(+). Its function is as follows. Specifically methylates guanosine-37 in various tRNAs. The sequence is that of tRNA (guanine-N(1)-)-methyltransferase from Gloeobacter violaceus (strain ATCC 29082 / PCC 7421).